We begin with the raw amino-acid sequence, 4652 residues long: Low-density lipoprotein receptor-related protein 2 (4652 aa).

An N-terminal signal peptide occupies residues 1-25 (MERWAAAAACTLLLAFAACLAPASG). Residues 26-4422 (RECLGNEFRC…SKGISPGTTV (4397 aa)) lie on the Extracellular side of the membrane. 7 LDL-receptor class A domains span residues 27 to 63 (ECLG…IGCP), 66 to 104 (TCGS…QRCP), 108 to 144 (TCSS…INCR), 142 to 181 (NCRY…LNCT), 183 to 219 (RCLR…HSCS), 223 to 259 (PCKG…DGCE), and 267 to 308 (ECYP…RVCD). Intrachain disulfides connect Cys28-Cys40, Cys35-Cys53, Cys47-Cys62, Cys67-Cys80, Cys74-Cys93, Cys87-Cys103, Cys109-Cys121, Cys116-Cys134, Cys128-Cys143, Cys143-Cys158, Cys153-Cys171, Cys165-Cys180, Cys184-Cys196, Cys191-Cys209, Cys203-Cys218, Cys224-Cys236, Cys231-Cys249, Cys243-Cys258, Cys268-Cys281, Cys275-Cys294, and Cys288-Cys307. N-linked (GlcNAc...) asparagine glycans are attached at residues Asn160 and Asn179. A glycan (N-linked (GlcNAc...) asparagine) is linked at Asn341. Positions 348–386 (DFNDCQIWGICDHFCEDRIGHHQCFCAEGYVLEHEQHCR) constitute an EGF-like 1; calcium-binding domain. Cystine bridges form between Cys352–Cys362, Cys358–Cys371, and Cys373–Cys385. The N-linked (GlcNAc...) asparagine glycan is linked to Asn388. 8 LDL-receptor class B repeats span residues 436–478 (SKVF…DWIN), 479–521 (NKLY…DPTV), 522–568 (GYLF…DLVA), 569–613 (KRVY…FEDN), 753–795 (NAIF…DWIS), 796–837 (RNLY…HPIA), 838–881 (GYIF…DWGS), and 882–925 (SRLY…FGEY). The N-linked (GlcNAc...) asparagine glycan is linked to Asn771. Asn866 is a glycosylation site (N-linked (GlcNAc...) asparagine). Asn1015 is a glycosylation site (N-linked (GlcNAc...) asparagine). In terms of domain architecture, LDL-receptor class A 8 spans 1025-1061 (QCGALSFPCNNGRCVPLHYRCDGVDDCHDNSDEVQCG). 3 cysteine pairs are disulfide-bonded: Cys1026/Cys1038, Cys1033/Cys1051, and Cys1045/Cys1060. Residue Asn1064 is glycosylated (N-linked (GlcNAc...) asparagine). LDL-receptor class A domains follow at residues 1066 to 1104 (SCAP…QNCS), 1110 to 1146 (SCRA…KRCD), 1150 to 1186 (TCSP…SACV), 1188 to 1225 (NCTD…IDCP), 1231 to 1269 (MCRQ…SGCP), 1272 to 1308 (TCPX…KDCP), and 1313 to 1351 (LCPS…PLCN). 9 disulfides stabilise this stretch: Cys1067-Cys1081, Cys1074-Cys1094, Cys1088-Cys1103, Cys1111-Cys1123, Cys1118-Cys1136, Cys1130-Cys1145, Cys1151-Cys1163, Cys1158-Cys1176, and Cys1170-Cys1185. A glycan (N-linked (GlcNAc...) asparagine) is linked at Asn1102. Residues Trp1128, Asp1131, Asp1133, Asp1135, Asp1141, and Glu1142 each coordinate Ca(2+). An N-linked (GlcNAc...) asparagine glycan is attached at Asn1188. 12 cysteine pairs are disulfide-bonded: Cys1189–Cys1202, Cys1196–Cys1215, Cys1209–Cys1224, Cys1232–Cys1245, Cys1239–Cys1258, Cys1252–Cys1268, Cys1273–Cys1285, Cys1280–Cys1298, Cys1292–Cys1307, Cys1314–Cys1327, Cys1321–Cys1340, and Cys1334–Cys1350. Ca(2+) contacts are provided by Tyr1207, Asp1210, Val1212, Asp1214, Asp1220, and Glu1221. A glycan (N-linked (GlcNAc...) asparagine) is linked at Asn1329. N-linked (GlcNAc...) asparagine glycosylation is found at Asn1385, Asn1452, Asn1498, and Asn1552. LDL-receptor class B repeat units follow at residues 1480-1522 (GRIF…DWVG), 1523-1565 (RNLY…DPRV), 1568-1611 (RVIF…DYPT), 1612-1654 (RLLY…TIFE), 1655-1696 (DSIY…VHPA), 1789-1831 (QFLY…DWLS), 1832-1881 (RNLY…DPAK), 1882-1929 (GKLY…DIQE), 1930-1971 (QKLY…YGPY), and 1972-2012 (LYYA…YRRR). Asn1677 and Asn1809 each carry an N-linked (GlcNAc...) asparagine glycan. Asn2053 carries an N-linked (GlcNAc...) asparagine glycan. 9 LDL-receptor class B repeats span residues 2105 to 2154 (GFVY…DWVA), 2155 to 2199 (GNLY…DPKN), 2200 to 2243 (RYLF…DHNS), 2244 to 2287 (GYIY…FGNS), 2429 to 2475 (NRIY…DWIG), 2476 to 2516 (RRIY…DPCQ), 2517 to 2560 (GYMY…DYKE), 2561 to 2602 (NLLY…YGQY), and 2603 to 2644 (IYWT…VVNN). Asn2175 and Asn2222 each carry an N-linked (GlcNAc...) asparagine glycan. A glycan (N-linked (GlcNAc...) asparagine) is linked at Asn2485. LDL-receptor class A domains follow at residues 2696–2734 (RCNS…TLCA), 2737–2773 (TCPP…SGCR), 2776–2815 (SCNI…KNCA), 2818–2857 (TCLP…IYCV), 2860–2897 (TCKN…ATCV), 2902–2941 (TCSS…HHCE), 2944–2986 (NCSS…QNCT), 2989–3025 (NCSG…RNCK), 3028–3066 (ACDE…HLCH), and 3071–3107 (TCPP…ERCG). 18 disulfides stabilise this stretch: Cys2697/Cys2709, Cys2704/Cys2722, Cys2716/Cys2733, Cys2738/Cys2750, Cys2745/Cys2763, Cys2757/Cys2772, Cys2777/Cys2790, Cys2785/Cys2803, Cys2797/Cys2814, Cys2819/Cys2832, Cys2826/Cys2845, Cys2839/Cys2856, Cys2861/Cys2873, Cys2868/Cys2886, Cys2880/Cys2896, Cys2903/Cys2915, Cys2910/Cys2928, and Cys2922/Cys2940. Asn2698 carries an N-linked (GlcNAc...) asparagine glycan. Asn2778 is a glycosylation site (N-linked (GlcNAc...) asparagine). Residues Asn2806 and Asn2807 are each glycosylated (N-linked (GlcNAc...) asparagine). N-linked (GlcNAc...) asparagine glycosylation occurs at Asn2944. 3 disulfides stabilise this stretch: Cys2945–Cys2962, Cys2952–Cys2975, and Cys2969–Cys2985. Residues Asn2984 and Asn2989 are each glycosylated (N-linked (GlcNAc...) asparagine). 9 cysteine pairs are disulfide-bonded: Cys2990-Cys3002, Cys2997-Cys3015, Cys3009-Cys3024, Cys3029-Cys3041, Cys3036-Cys3054, Cys3048-Cys3065, Cys3072-Cys3084, Cys3079-Cys3097, and Cys3091-Cys3106. A glycan (N-linked (GlcNAc...) asparagine) is linked at Asn3122. The EGF-like 2; calcium-binding domain maps to 3149 to 3189 (DIDECKETPSVCSQKCENLLGSYICKCAPGYTREPDGRSCR). Intrachain disulfides connect Cys3153-Cys3164, Cys3160-Cys3173, and Cys3175-Cys3188. N-linked (GlcNAc...) asparagine glycosylation is found at Asn3208, Asn3254, Asn3312, and Asn3352. 5 LDL-receptor class B repeats span residues 3236–3278 (ERLY…DWVT), 3279–3321 (RKLY…DKPR), 3330–3373 (GYVY…DYTN), 3374–3417 (DLLY…FEDT), and 3418–3458 (IYWT…YHPY). Residues Asn3435 and Asn3444 are each glycosylated (N-linked (GlcNAc...) asparagine). 9 LDL-receptor class A domains span residues 3509 to 3547 (MCSS…NTCP), 3550 to 3588 (FCRL…VLCE), 3591 to 3629 (RCES…SHCA), 3632 to 3670 (TCLP…QECM), 3675 to 3713 (RCDN…QNCE), 3716 to 3753 (TCKP…ENCV), 3756 to 3792 (QCSE…RDCE), 3795 to 3831 (TCHP…ATCP), and 3839 to 3877 (YCPA…HLCL). 27 disulfides stabilise this stretch: Cys3510/Cys3523, Cys3517/Cys3536, Cys3530/Cys3546, Cys3551/Cys3563, Cys3558/Cys3576, Cys3570/Cys3587, Cys3592/Cys3604, Cys3599/Cys3617, Cys3611/Cys3628, Cys3633/Cys3645, Cys3640/Cys3658, Cys3652/Cys3669, Cys3676/Cys3690, Cys3684/Cys3703, Cys3697/Cys3712, Cys3717/Cys3730, Cys3725/Cys3743, Cys3737/Cys3752, Cys3757/Cys3769, Cys3764/Cys3782, Cys3776/Cys3791, Cys3796/Cys3808, Cys3803/Cys3821, Cys3815/Cys3830, Cys3840/Cys3852, Cys3847/Cys3865, and Cys3859/Cys3876. Asn3562 carries an N-linked (GlcNAc...) asparagine glycan. The N-linked (GlcNAc...) asparagine glycan is linked to Asn3678. Asn3878 is a glycosylation site (N-linked (GlcNAc...) asparagine). 2 LDL-receptor class A domains span residues 3880-3919 (TCDL…ENCL) and 3925-3961 (PCTE…TGCN). 12 disulfide bridges follow: Cys3881/Cys3894, Cys3889/Cys3907, Cys3901/Cys3918, Cys3926/Cys3938, Cys3933/Cys3951, Cys3945/Cys3960, Cys3968/Cys3977, Cys3973/Cys3987, Cys3989/Cys4003, Cys4009/Cys4019, Cys4015/Cys4028, and Cys4030/Cys4045. The EGF-like 3 domain occupies 3964-4004 (EERSCAENLCEHNCTQLIGGGFICSCRPGFKASSLNRNSCE). An N-linked (GlcNAc...) asparagine glycan is attached at Asn3976. The 42-residue stretch at 4005–4046 (DINECEQFGVCPQNCHNTKGSYECTCAEGFRSMSEHYGERCA) folds into the EGF-like 4; calcium-binding domain. Asn4066 carries an N-linked (GlcNAc...) asparagine glycan. LDL-receptor class B repeat units follow at residues 4152–4194 (RHIY…NPKQ), 4195–4238 (GLMY…DYVN), and 4240–4281 (DRIY…FESQ). An N-linked (GlcNAc...) asparagine glycan is attached at Asn4325. Residues 4375-4409 (MPPPCRCMNEGNCYFDKNNLPKCKCPSGYMGEYCE) enclose the EGF-like 5 domain. 3 cysteine pairs are disulfide-bonded: Cys4379/Cys4387, Cys4381/Cys4397, and Cys4399/Cys4408. The helical transmembrane segment at 4423-4443 (AVLVTLILIIIIGGLVALGFF) threads the bilayer. The Cytoplasmic portion of the chain corresponds to 4444–4652 (HYRKTGSILI…ANLVREDSEA (209 aa)). Residues 4450–4459 (SILISMPRLP) carry the SH3-binding motif. The short motif at 4453 to 4458 (ISMPRL) is the PxLPxI/L motif 1; mediates interaction with ANKRA2 element. Residues 4456–4461 (PRLPSL) carry the PxLPxI/L motif 2; mediates interaction with ANKRA2 motif. Residue Ser4460 is modified to Phosphoserine. The short motif at 4518-4523 (FENPMY) is the Endocytosis signal element. Residues 4536 to 4553 (TTTQVSESGNVYNKNYGS) are compositionally biased toward polar residues. The segment at 4536–4652 (TTTQVSESGN…ANLVREDSEA (117 aa)) is disordered. Ser4568 is modified (phosphoserine). Positions 4588-4601 (QNTNFENPIYAETE) are interaction with DAB2. The short motif at 4594–4597 (NPIY) is the NPXY motif element. Residues 4597-4600 (YAET) carry the SH2-binding motif. The SH3-binding signature appears at 4610-4621 (VTPPPSPSPPAK). Ser4615 is modified (phosphoserine). The segment covering 4626–4636 (KGTTPAYSATE) has biased composition (polar residues). Thr4629 bears the Phosphothreonine mark. A Phosphoserine modification is found at Ser4650.

This sequence belongs to the LDLR family. Binds plasminogen, extracellular matrix components, plasminogen activator-plasminogen activator inhibitor type I complex, apolipoprotein E-enriched beta-VLDL, lipoprotein lipase, lactoferrin, CLU/clusterin and calcium. Forms a multimeric complex together with LRPAP1. Interacts (via PxLPxI/L motif) with ANKRA2 (via ankyrin repeats). Interacts with LRP2BP. Interacts (via NPXY motif) with DAB2; the interaction is not affected by tyrosine phosphorylation of the NPXY motif. Interacts with MB. Interacts with BMP4. Interacts with the Sonic hedgehog protein N-product which is the active product of SHH. Interacts with CST3 in a calcium-dependent manner. Interacts with the vitamin-D binding protein GC/DBP. Interacts with sex hormone-binding protein SHBG. Interacts with angiotensin-2. Also interacts with angiotensin 1-7. Interacts with APOM. Interacts with selenoprotein SEPP1. Interacts with LEP. Interacts with ALB. Interacts with the antiapoptotic protein BIRC5/survivin. Interacts with matrix metalloproteinase MMP2 in complex with metalloproteinase inhibitor TIMP1. In neurons, forms a trimeric complex with APP and APPB1/FE65. Interacts with LDLRAP1/ARH; mediates trafficking of LRP2 to the endocytic recycling compartment. Does not interact with beta-amyloid protein 40 alone but interacts with the complex composed of beta-amyloid protein 40 and CLU/APOJ. Interacts with MDK. Post-translationally, a fraction undergoes proteolytic cleavage of the extracellular domain at the cell membrane to generate a cytoplasmic tail fragment. This is internalized into the early endosome from where it trafficks in an LDLRAP1/ARH-dependent manner to the endocytic recycling compartment (ERC). In the ERC, it is further cleaved by gamma-secretase to release a fragment which translocates to the nucleus and mediates transcriptional repression. N-glycosylation is required for ligand binding.

Its subcellular location is the apical cell membrane. The protein localises to the endosome lumen. It is found in the membrane. It localises to the clathrin-coated pit. The protein resides in the cell projection. Its subcellular location is the dendrite. The protein localises to the axon. Its function is as follows. Multiligand endocytic receptor. Acts together with CUBN to mediate endocytosis of high-density lipoproteins. Mediates receptor-mediated uptake of polybasic drugs such as aprotinin, aminoglycosides and polymyxin B. In the kidney, mediates the tubular uptake and clearance of leptin. Also mediates transport of leptin across the blood-brain barrier through endocytosis at the choroid plexus epithelium. Endocytosis of leptin in neuronal cells is required for hypothalamic leptin signaling and leptin-mediated regulation of feeding and body weight. Mediates endocytosis and subsequent lysosomal degradation of CST3 in kidney proximal tubule cells. Mediates renal uptake of 25-hydroxyvitamin D3 in complex with the vitamin D3 transporter GC/DBP. Mediates renal uptake of metallothionein-bound heavy metals. Together with CUBN, mediates renal reabsorption of myoglobin. Mediates renal uptake and subsequent lysosomal degradation of APOM. Plays a role in kidney selenium homeostasis by mediating renal endocytosis of selenoprotein SEPP1. Mediates renal uptake of the antiapoptotic protein BIRC5/survivin which may be important for functional integrity of the kidney. Mediates renal uptake of matrix metalloproteinase MMP2 in complex with metalloproteinase inhibitor TIMP1. Mediates endocytosis of Sonic hedgehog protein N-product (ShhN), the active product of SHH. Also mediates ShhN transcytosis. In the embryonic neuroepithelium, mediates endocytic uptake and degradation of BMP4, is required for correct SHH localization in the ventral neural tube and plays a role in patterning of the ventral telencephalon. Required at the onset of neurulation to sequester SHH on the apical surface of neuroepithelial cells of the rostral diencephalon ventral midline and to control PTCH1-dependent uptake and intracellular trafficking of SHH. During neurulation, required in neuroepithelial cells for uptake of folate bound to the folate receptor FOLR1 which is necessary for neural tube closure. In the adult brain, negatively regulates BMP signaling in the subependymal zone which enables neurogenesis to proceed. In astrocytes, mediates endocytosis of ALB which is required for the synthesis of the neurotrophic factor oleic acid. Involved in neurite branching. During optic nerve development, required for SHH-mediated migration and proliferation of oligodendrocyte precursor cells. Mediates endocytic uptake and clearance of SHH in the retinal margin which protects retinal progenitor cells from mitogenic stimuli and keeps them quiescent. Plays a role in reproductive organ development by mediating uptake in reproductive tissues of androgen and estrogen bound to the sex hormone binding protein SHBG. Mediates endocytosis of angiotensin-2. Also mediates endocytosis of angiotensis 1-7. Binds to the complex composed of beta-amyloid protein 40 and CLU/APOJ and mediates its endocytosis and lysosomal degradation. Required for embryonic heart development. Required for normal hearing, possibly through interaction with estrogen in the inner ear. In Sus scrofa (Pig), this protein is Low-density lipoprotein receptor-related protein 2.